We begin with the raw amino-acid sequence, 396 residues long: GDSL esterase/lipase ACHE (396 aa).

Residues 1 to 31 form the signal peptide; it reads MATAATATAGSRAAVLLLLSLALALALRPSD. Ser-49 (nucleophile) is an active-site residue. Residues Asn-108, Asn-126, Asn-151, Asn-196, and Asn-339 are each glycosylated (N-linked (GlcNAc...) asparagine). Catalysis depends on residues Asp-359 and His-362.

The protein belongs to the 'GDSL' lipolytic enzyme family.

The protein localises to the secreted. Esterase that can hydrolyze acetylthiocholine and propionylthiocholine in vitro. Substrate preference is propionylthiocholine &gt; acetylthiocholine. Possesses extremely low activity against butyrylthiocholine. The protein is GDSL esterase/lipase ACHE of Zea mays (Maize).